Here is a 51-residue protein sequence, read N- to C-terminus: Cytochrome b559 subunit beta (51 aa).

A helical membrane pass occupies residues 26-42 (WLAVHALAVPTVFFIGS). Position 30 (H30) interacts with heme.

The protein belongs to the PsbE/PsbF family. As to quaternary structure, heterodimer of an alpha subunit and a beta subunit. PSII is composed of 1 copy each of membrane proteins PsbA, PsbB, PsbC, PsbD, PsbE, PsbF, PsbH, PsbI, PsbJ, PsbK, PsbL, PsbM, PsbT, PsbY, PsbZ, Psb30/Ycf12, at least 3 peripheral proteins of the oxygen-evolving complex and a large number of cofactors. It forms dimeric complexes. Heme b serves as cofactor.

The protein localises to the plastid. It localises to the chloroplast thylakoid membrane. Functionally, this b-type cytochrome is tightly associated with the reaction center of photosystem II (PSII). PSII is a light-driven water:plastoquinone oxidoreductase that uses light energy to abstract electrons from H(2)O, generating O(2) and a proton gradient subsequently used for ATP formation. It consists of a core antenna complex that captures photons, and an electron transfer chain that converts photonic excitation into a charge separation. This is Cytochrome b559 subunit beta from Bigelowiella natans (Pedinomonas minutissima).